Reading from the N-terminus, the 756-residue chain is Xylosyl- and glucuronyltransferase LARGE1 (756 aa).

At 1-10 (MLGICRGRRK) the chain is on the cytoplasmic side. The chain crosses the membrane as a helical; Signal-anchor for type II membrane protein span at residues 11–31 (FLAASLTLLCIPAITWIYLFA). Over 32–756 (GSFEDGKPVS…LKYLTAENNS (725 aa)) the chain is Lumenal. Disordered stretches follow at residues 43-64 (SPLESQAHSPRYTASSQRERES) and 82-108 (QLSLAQGQSPAHHRGNHSKTYSMEEGT). Over residues 44-58 (PLESQAHSPRYTASS) the composition is skewed to polar residues. Residues 53 to 95 (RYTASSQRERESLEVRVREVEEENRALRRQLSLAQGQSPAHHR) are a coiled coil. N-linked (GlcNAc...) asparagine glycans are attached at residues Asn-97, Asn-122, and Asn-148. The tract at residues 138–413 (IHVAIVCAGY…FLEYDGNLLR (276 aa)) is xylosyltransferase activity. Positions 242 and 244 each coordinate Mn(2+). Asn-272 is a glycosylation site (N-linked (GlcNAc...) asparagine). The interval 414–756 (RELFGCPSET…LKYLTAENNS (343 aa)) is glucuronyltransferase activity. Mn(2+)-binding residues include Asp-563 and Asp-565.

It in the C-terminal section; belongs to the glycosyltransferase 49 family. In the N-terminal section; belongs to the glycosyltransferase 8 family. In terms of assembly, interacts with DAG1 (via the N-terminal domain of alpha-DAG1); the interaction increases binding of DAG1 to laminin. Interacts with B4GAT1. It depends on Mn(2+) as a cofactor. Ubiquitous. Highest expression in heart, diaphragm and brain, where it is especially found in cerebral cortex, hippocampus, and trigeminal ganglion.

The protein resides in the golgi apparatus membrane. It catalyses the reaction 3-O-[beta-D-GlcA-(1-&gt;3)-beta-D-Xyl-(1-&gt;4)-Rib-ol-P-Rib-ol-P-3-beta-D-GalNAc-(1-&gt;3)-beta-D-GlcNAc-(1-&gt;4)-(O-6-P-alpha-D-Man)]-Thr-[protein] + UDP-alpha-D-xylose = 3-O-[alpha-D-Xyl-(1-&gt;3)-beta-D-GlcA-(1-&gt;4)-beta-D-Xyl-(1-&gt;4)-Rib-ol-P-Rib-ol-P-3-beta-D-GalNAc-(1-&gt;3)-beta-D-GlcNAc-(1-&gt;4)-(O-6-P-alpha-D-Man)]-Thr-[protein] + UDP + H(+). The catalysed reaction is 3-O-{(1-&gt;[3)-alpha-D-Xyl-(1-&gt;3)-beta-D-GlcA-(1-&gt;](n)-4)-beta-D-Xyl-(1-&gt;4)-Rib-ol-P-Rib-ol-P-3-beta-D-GalNAc-(1-&gt;3)-beta-D-GlcNAc-(1-&gt;4)-O-6-P-alpha-D-Man}-L-Thr-[protein] + UDP-alpha-D-glucuronate = 3-O-{beta-D-GlcA-(1-&gt;[3)-alpha-D-Xyl-(1-&gt;3)-beta-D-GlcA-(1-&gt;](n)-4)-beta-D-Xyl-(1-&gt;4)-Rib-ol-P-Rib-ol-P-3-beta-D-GalNAc-(1-&gt;3)-beta-D-GlcNAc-(1-&gt;4)-O-6-P-alpha-D-Man}-L-Thr-[protein] + UDP + H(+). It carries out the reaction 3-O-{beta-D-GlcA-(1-&gt;[3)-alpha-D-Xyl-(1-&gt;3)-beta-D-GlcA-(1-&gt;](n)-4)-beta-D-Xyl-(1-&gt;4)-Rib-ol-P-Rib-ol-P-3-beta-D-GalNAc-(1-&gt;3)-beta-D-GlcNAc-(1-&gt;4)-O-6-P-alpha-D-Man}-L-Thr-[protein] + UDP-alpha-D-xylose = 3-O-{(1-&gt;[3)-alpha-D-Xyl-(1-&gt;3)-beta-D-GlcA-(1-&gt;](n+1)-4)-beta-D-Xyl-(1-&gt;4)-Rib-ol-P-Rib-ol-P-3-beta-D-GalNAc-(1-&gt;3)-beta-D-GlcNAc-(1-&gt;4)-O-6-P-alpha-D-Man}-L-Thr-[protein] + UDP + H(+). Its pathway is protein modification; protein glycosylation. Bifunctional glycosyltransferase with both alpha-1,3-xylosyltransferase and beta-1,3-glucuronyltransferase activities involved in the maturation of alpha-dystroglycan (DAG1) by glycosylation leading to DAG1 binding to laminin G-like domain-containing extracellular proteins with high affinity. Elongates the glucuronyl-beta-1,4-xylose-beta disaccharide primer structure initiated by B4GAT1 by adding repeating units [-3-Xylose-alpha-1,3-GlcA-beta-1-] to produce a heteropolysaccharide. Requires the phosphorylation of core M3 (O-mannosyl trisaccharide) by POMK to elongate the glucuronyl-beta-1,4-xylose-beta disaccharide primer. Plays a key role in skeletal muscle function and regeneration. In Mus musculus (Mouse), this protein is Xylosyl- and glucuronyltransferase LARGE1.